We begin with the raw amino-acid sequence, 105 residues long: uncharacterized protein (105 aa).

The N-terminal stretch at 1–24 (MYWPCLVITPFTVGESFCLLLSLG) is a signal peptide.

This is an uncharacterized protein from Saccharomyces cerevisiae (strain ATCC 204508 / S288c) (Baker's yeast).